The primary structure comprises 151 residues: Succinate dehydrogenase subunit 4, mitochondrial (151 aa).

A mitochondrion-targeting transit peptide spans 1–78 (MSLRRTILDL…RSISSSIGQS (78 aa)). Position 109 (histidine 109) interacts with heme. Tyrosine 121 provides a ligand contact to a ubiquinone. A helical transmembrane segment spans residues 130–150 (LIVMSLGLFQIIVLKDIILFL).

Component of complex II composed of eight subunits in plants: four classical SDH subunits SDH1, SDH2, SDH3 and SDH4 (a flavoprotein (FP), an iron-sulfur protein (IP), and a cytochrome b composed of a large and a small subunit.), as well as four subunits unknown in mitochondria from bacteria and heterotrophic eukaryotes. It depends on heme as a cofactor. As to expression, expressed in flowers, inflorescences and stems.

It is found in the mitochondrion inner membrane. It functions in the pathway carbohydrate metabolism; tricarboxylic acid cycle. Membrane-anchoring subunit of succinate dehydrogenase (SDH). The chain is Succinate dehydrogenase subunit 4, mitochondrial from Arabidopsis thaliana (Mouse-ear cress).